A 387-amino-acid chain; its full sequence is Alkanesulfonate monooxygenase (387 aa).

Belongs to the SsuD family.

The catalysed reaction is an alkanesulfonate + FMNH2 + O2 = an aldehyde + FMN + sulfite + H2O + 2 H(+). Catalyzes the desulfonation of aliphatic sulfonates. The polypeptide is Alkanesulfonate monooxygenase (Cupriavidus pinatubonensis (strain JMP 134 / LMG 1197) (Cupriavidus necator (strain JMP 134))).